Consider the following 169-residue polypeptide: CKLF-like MARVEL transmembrane domain-containing protein 2A (169 aa).

The next 4 helical transmembrane spans lie at 40–60 (FWLS…ISAL), 69–89 (HPVL…FIFL), 98–118 (IPFV…CVFL), and 136–156 (YLTA…DMLL). One can recognise an MARVEL domain in the interval 40 to 162 (FWLSGHAVFK…DMLLQFQHFR (123 aa)).

This sequence belongs to the chemokine-like factor family.

Its subcellular location is the membrane. The polypeptide is CKLF-like MARVEL transmembrane domain-containing protein 2A (Cmtm2a) (Mus musculus (Mouse)).